The primary structure comprises 508 residues: Photosystem II CP47 reaction center protein (508 aa).

The next 6 helical transmembrane spans lie at 21 to 36 (SVHI…WAGS), 101 to 115 (IVFS…IWHW), 140 to 156 (GIHL…FGAF), 203 to 218 (IAAG…FHLS), 237 to 252 (VLSS…AFVV), and 457 to 472 (SFAL…HGAR).

This sequence belongs to the PsbB/PsbC family. PsbB subfamily. As to quaternary structure, PSII is composed of 1 copy each of membrane proteins PsbA, PsbB, PsbC, PsbD, PsbE, PsbF, PsbH, PsbI, PsbJ, PsbK, PsbL, PsbM, PsbT, PsbX, PsbY, PsbZ, Psb30/Ycf12, at least 3 peripheral proteins of the oxygen-evolving complex and a large number of cofactors. It forms dimeric complexes. The cofactor is Binds multiple chlorophylls. PSII binds additional chlorophylls, carotenoids and specific lipids..

It localises to the plastid. The protein localises to the chloroplast thylakoid membrane. One of the components of the core complex of photosystem II (PSII). It binds chlorophyll and helps catalyze the primary light-induced photochemical processes of PSII. PSII is a light-driven water:plastoquinone oxidoreductase, using light energy to abstract electrons from H(2)O, generating O(2) and a proton gradient subsequently used for ATP formation. The sequence is that of Photosystem II CP47 reaction center protein from Vitis vinifera (Grape).